Here is a 155-residue protein sequence, read N- to C-terminus: Small ribosomal subunit protein uS9 (155 aa).

The protein belongs to the universal ribosomal protein uS9 family.

The sequence is that of Small ribosomal subunit protein uS9 from Rhizobium leguminosarum bv. trifolii (strain WSM2304).